We begin with the raw amino-acid sequence, 421 residues long: Ameloblastin (421 aa).

An N-terminal signal peptide occupies residues 1–26; the sequence is MPALKIPLFKMKDMVLILCLLKMSSA. A Hydroxyproline modification is found at Pro37. A Phosphoserine modification is found at Ser43. 3 disordered regions span residues 104–126, 264–311, and 333–421; these read PVHP…QKPF, GGMP…ADPE, and GKIP…FQEP. The O-linked (GalNAc...) serine glycan is linked to Ser112. Positions 113–125 are enriched in low complexity; that stretch reads QPSLQPQQPGQKP. The span at 339-350 shows a compositional bias: low complexity; it reads ARGPAGRSRGPP. A compositionally biased stretch (polar residues) spans 388–410; that stretch reads MDSTATPYSEHTSMPGNKAQQPQ. Over residues 411–421 the composition is skewed to basic and acidic residues; sequence IKRDAWRFQEP.

It belongs to the ameloblastin family. In terms of tissue distribution, ameloblast-specific. Located at the Tomes processes of secretory ameloblasts and in the sheath space between rod-interrod enamel.

The protein localises to the secreted. It is found in the extracellular space. The protein resides in the extracellular matrix. Its function is as follows. Involved in the mineralization and structural organization of enamel. The polypeptide is Ameloblastin (AMBN) (Sus scrofa (Pig)).